The primary structure comprises 176 residues: NAD(P)H-quinone oxidoreductase subunit 6, chloroplastic (176 aa).

Transmembrane regions (helical) follow at residues 10–30 (FLLV…VLLT), 32–52 (PIYS…FYIL), 61–81 (AQLL…VMFM), 92–112 (LWTV…VSLM), and 152–172 (FFLP…GAIA).

This sequence belongs to the complex I subunit 6 family. As to quaternary structure, NDH is composed of at least 16 different subunits, 5 of which are encoded in the nucleus.

The protein resides in the plastid. Its subcellular location is the chloroplast thylakoid membrane. It carries out the reaction a plastoquinone + NADH + (n+1) H(+)(in) = a plastoquinol + NAD(+) + n H(+)(out). The catalysed reaction is a plastoquinone + NADPH + (n+1) H(+)(in) = a plastoquinol + NADP(+) + n H(+)(out). In terms of biological role, NDH shuttles electrons from NAD(P)H:plastoquinone, via FMN and iron-sulfur (Fe-S) centers, to quinones in the photosynthetic chain and possibly in a chloroplast respiratory chain. The immediate electron acceptor for the enzyme in this species is believed to be plastoquinone. Couples the redox reaction to proton translocation, and thus conserves the redox energy in a proton gradient. The chain is NAD(P)H-quinone oxidoreductase subunit 6, chloroplastic (ndhG) from Eucalyptus globulus subsp. globulus (Tasmanian blue gum).